Consider the following 70-residue polypeptide: Spore germination protein-like protein YpzD (70 aa).

Belongs to the GerPA/GerPF family.

This is Spore germination protein-like protein YpzD (ypzD) from Bacillus subtilis (strain 168).